Reading from the N-terminus, the 188-residue chain is dTTP/UTP pyrophosphatase (188 aa).

The Proton acceptor role is filled by aspartate 70.

This sequence belongs to the Maf family. YhdE subfamily. It depends on a divalent metal cation as a cofactor.

The protein localises to the cytoplasm. The catalysed reaction is dTTP + H2O = dTMP + diphosphate + H(+). The enzyme catalyses UTP + H2O = UMP + diphosphate + H(+). Functionally, nucleoside triphosphate pyrophosphatase that hydrolyzes dTTP and UTP. May have a dual role in cell division arrest and in preventing the incorporation of modified nucleotides into cellular nucleic acids. This chain is dTTP/UTP pyrophosphatase, found in Clostridium botulinum (strain Eklund 17B / Type B).